A 33-amino-acid chain; its full sequence is Photosystem II reaction center protein Psb30 (33 aa).

A helical membrane pass occupies residues 7-27 (IQLGSLTLITLTGPLIIGIIF).

Belongs to the Psb30/Ycf12 family. PSII is composed of 1 copy each of membrane proteins PsbA, PsbB, PsbC, PsbD, PsbE, PsbF, PsbH, PsbI, PsbJ, PsbK, PsbL, PsbM, PsbT, PsbY, PsbZ, Psb30/Ycf12, peripheral proteins of the oxygen-evolving complex and a large number of cofactors. It forms dimeric complexes.

The protein resides in the plastid. The protein localises to the chloroplast thylakoid membrane. Functionally, a core subunit of photosystem II (PSII), probably helps stabilize the reaction center. The chain is Photosystem II reaction center protein Psb30 from Euglena gracilis.